The sequence spans 331 residues: Vitamin B12 import system permease protein BtuC (331 aa).

Transmembrane regions (helical) follow at residues 20 to 42 (VMLA…FLSP), 62 to 84 (LVAA…VLLG), 91 to 113 (GVLG…LPVM), 117 to 136 (TVFM…ILVG), 148 to 170 (MLLV…FYFS), 190 to 209 (SWHH…WLCL), 240 to 262 (LAIS…VGLV), 277 to 296 (FLLP…SDIW), and 303 to 325 (SAEL…WMLI).

The protein belongs to the binding-protein-dependent transport system permease family. FecCD subfamily. The complex is composed of two ATP-binding proteins (BtuD), two transmembrane proteins (BtuC) and a solute-binding protein (BtuF).

Its subcellular location is the cell inner membrane. Its function is as follows. Part of the ABC transporter complex BtuCDF involved in vitamin B12 import. Involved in the translocation of the substrate across the membrane. This Vibrio vulnificus (strain CMCP6) protein is Vitamin B12 import system permease protein BtuC.